The following is a 262-amino-acid chain: Putative cysteine-rich repeat secretory protein 24 (262 aa).

The signal sequence occupies residues 1-29 (MSLSSSVTKHLISASILAIVAMQLPSVHS). 2 Gnk2-homologous domains span residues 39–141 (YLHH…SIYT) and 147–259 (YKNN…LYPF).

It belongs to the cysteine-rich repeat secretory protein family.

Its subcellular location is the secreted. This Arabidopsis thaliana (Mouse-ear cress) protein is Putative cysteine-rich repeat secretory protein 24 (CRRSP24).